The chain runs to 85 residues: uncharacterized protein (85 aa).

The chain crosses the membrane as a helical span at residues 39-59 (FILFEISMYIIFIVTFCYKII).

The protein localises to the host membrane. This is an uncharacterized protein from Gallid herpesvirus 2 (strain Chicken/Md5/ATCC VR-987) (GaHV-2).